The chain runs to 95 residues: NADH-quinone oxidoreductase subunit K (95 aa).

The next 3 helical transmembrane spans lie at 1–21, 25–45, and 59–79; these read MSYL…VLTR, ILVF…LVGF, and MVIA…VAIF.

Belongs to the complex I subunit 4L family. NDH-1 is composed of 15 different subunits. Subunits NuoA, H, J, K, L, M, N constitute the membrane sector of the complex.

It localises to the cell inner membrane. The catalysed reaction is a quinone + NADH + 5 H(+)(in) = a quinol + NAD(+) + 4 H(+)(out). NDH-1 shuttles electrons from NADH, via FMN and iron-sulfur (Fe-S) centers, to quinones in the respiratory chain. The immediate electron acceptor for the enzyme in this species is believed to be a menaquinone. Couples the redox reaction to proton translocation (for every two electrons transferred, four hydrogen ions are translocated across the cytoplasmic membrane), and thus conserves the redox energy in a proton gradient. The protein is NADH-quinone oxidoreductase subunit K of Thermus thermophilus (strain ATCC BAA-163 / DSM 7039 / HB27).